The sequence spans 456 residues: UDP-N-acetylmuramoylalanine--D-glutamate ligase (456 aa).

Glycine 119–threonine 125 is a binding site for ATP.

This sequence belongs to the MurCDEF family.

It is found in the cytoplasm. It catalyses the reaction UDP-N-acetyl-alpha-D-muramoyl-L-alanine + D-glutamate + ATP = UDP-N-acetyl-alpha-D-muramoyl-L-alanyl-D-glutamate + ADP + phosphate + H(+). Its pathway is cell wall biogenesis; peptidoglycan biosynthesis. Cell wall formation. Catalyzes the addition of glutamate to the nucleotide precursor UDP-N-acetylmuramoyl-L-alanine (UMA). This Limosilactobacillus reuteri (strain DSM 20016) (Lactobacillus reuteri) protein is UDP-N-acetylmuramoylalanine--D-glutamate ligase.